We begin with the raw amino-acid sequence, 477 residues long: Stromelysin-3 (477 aa).

Positions 1–17 (MHLLILLPALCVLGAHS) are cleaved as a signal peptide. The propeptide at 18–85 (APLSYTYLQH…SSSGRNRQKR (68 aa)) is activation peptide. The interval 64-83 (RCGVPDIPAPPDSSSGRNRQ) is disordered. Residues C65, H152, and D154 each contribute to the Zn(2+) site. 4 residues coordinate Ca(2+): D159, G160, G162, and I164. Residues H167, H180, and H203 each coordinate Zn(2+). Residue E204 is part of the active site. 2 residues coordinate Zn(2+): H207 and H213. An intrachain disulfide couples C279 to C466. 4 Hemopexin repeats span residues 280 to 324 (KTNF…WRGI), 325 to 369 (PDTV…GISV), 370 to 418 (TQIQ…WRGV), and 419 to 466 (PKGI…FFNC).

Belongs to the peptidase M10A family. The cofactor is Ca(2+). Zn(2+) is required as a cofactor. As to expression, expressed in fibroblast cells that are activated by thyroid hormone. High levels in resorbing tail.

The protein resides in the secreted. The protein localises to the extracellular space. It is found in the extracellular matrix. May be involved in the modification of the extracellular matrix during metamorphic apoptosis. This chain is Stromelysin-3 (mmp11), found in Xenopus laevis (African clawed frog).